The primary structure comprises 117 residues: Large ribosomal subunit protein uL18 (117 aa).

The protein belongs to the universal ribosomal protein uL18 family. Part of the 50S ribosomal subunit; part of the 5S rRNA/L5/L18/L25 subcomplex. Contacts the 5S and 23S rRNAs.

In terms of biological role, this is one of the proteins that bind and probably mediate the attachment of the 5S RNA into the large ribosomal subunit, where it forms part of the central protuberance. The protein is Large ribosomal subunit protein uL18 of Polynucleobacter necessarius subsp. necessarius (strain STIR1).